The following is a 254-amino-acid chain: 5-oxoprolinase subunit A (254 aa).

The protein belongs to the LamB/PxpA family. In terms of assembly, forms a complex composed of PxpA, PxpB and PxpC.

It carries out the reaction 5-oxo-L-proline + ATP + 2 H2O = L-glutamate + ADP + phosphate + H(+). In terms of biological role, catalyzes the cleavage of 5-oxoproline to form L-glutamate coupled to the hydrolysis of ATP to ADP and inorganic phosphate. This Bacillus mycoides (strain KBAB4) (Bacillus weihenstephanensis) protein is 5-oxoprolinase subunit A.